Reading from the N-terminus, the 429-residue chain is Ribosomal RNA small subunit methyltransferase B (429 aa).

Residues 254 to 260, Asp277, Asp303, and Asp322 contribute to the S-adenosyl-L-methionine site; that span reads CAAPGGK. The active-site Nucleophile is Cys375. Residues 397-419 are disordered; the sequence is ALSETGTPDQPGQQNLPGGEEGD. Polar residues predominate over residues 400–412; the sequence is ETGTPDQPGQQNL.

The protein belongs to the class I-like SAM-binding methyltransferase superfamily. RsmB/NOP family.

It localises to the cytoplasm. It catalyses the reaction cytidine(967) in 16S rRNA + S-adenosyl-L-methionine = 5-methylcytidine(967) in 16S rRNA + S-adenosyl-L-homocysteine + H(+). Functionally, specifically methylates the cytosine at position 967 (m5C967) of 16S rRNA. In Salmonella choleraesuis (strain SC-B67), this protein is Ribosomal RNA small subunit methyltransferase B.